The chain runs to 441 residues: E3 ubiquitin-protein ligase APD1 (441 aa).

The next 2 helical transmembrane spans lie at 60–80 and 305–325; these read SNLY…FILI and IAYV…IQFC. The RING-type zinc finger occupies 390-429; the sequence is CAICFDVPRDCFFLPCGHSVSCYECGTTMQEADGSCPICR.

Expressed in the shoot apical meristems (SAM), root tips and inflorescences, and, at low levels, in floral buds and pollen.

Its subcellular location is the endomembrane system. The protein localises to the vacuole membrane. It carries out the reaction S-ubiquitinyl-[E2 ubiquitin-conjugating enzyme]-L-cysteine + [acceptor protein]-L-lysine = [E2 ubiquitin-conjugating enzyme]-L-cysteine + N(6)-ubiquitinyl-[acceptor protein]-L-lysine.. It participates in protein modification; protein ubiquitination. In terms of biological role, involved in pollen mitosis II (PMII) regulation during male gametogenesis. The protein is E3 ubiquitin-protein ligase APD1 of Arabidopsis thaliana (Mouse-ear cress).